The chain runs to 214 residues: Probable GTP-binding protein EngB (214 aa).

The EngB-type G domain occupies 22-194; the sequence is NLPEIAFAGR…WARIDALLSP (173 aa). GTP is bound by residues 30 to 37, 57 to 61, 75 to 78, 142 to 145, and 173 to 175; these read GRSNVGKS, GRTQL, DLPG, TKCD, and FSA. The Mg(2+) site is built by Ser37 and Thr59.

This sequence belongs to the TRAFAC class TrmE-Era-EngA-EngB-Septin-like GTPase superfamily. EngB GTPase family. It depends on Mg(2+) as a cofactor.

Necessary for normal cell division and for the maintenance of normal septation. This chain is Probable GTP-binding protein EngB, found in Citrifermentans bemidjiense (strain ATCC BAA-1014 / DSM 16622 / JCM 12645 / Bem) (Geobacter bemidjiensis).